A 172-amino-acid polypeptide reads, in one-letter code: Shikimate kinase (172 aa).

Position 11-16 (11-16) interacts with ATP; sequence GAGKST. S15 is a binding site for Mg(2+). Substrate-binding residues include D33, R57, and G79. Position 117 (R117) interacts with ATP. A substrate-binding site is contributed by R136. R153 is a binding site for ATP.

Belongs to the shikimate kinase family. In terms of assembly, monomer. Mg(2+) serves as cofactor.

The protein localises to the cytoplasm. The catalysed reaction is shikimate + ATP = 3-phosphoshikimate + ADP + H(+). It functions in the pathway metabolic intermediate biosynthesis; chorismate biosynthesis; chorismate from D-erythrose 4-phosphate and phosphoenolpyruvate: step 5/7. Its function is as follows. Catalyzes the specific phosphorylation of the 3-hydroxyl group of shikimic acid using ATP as a cosubstrate. This Pseudomonas putida (strain ATCC 700007 / DSM 6899 / JCM 31910 / BCRC 17059 / LMG 24140 / F1) protein is Shikimate kinase.